The following is a 331-amino-acid chain: NADH-quinone oxidoreductase subunit H 2 (331 aa).

The next 8 helical transmembrane spans lie at alanine 6–alanine 26, isoleucine 79–proline 99, valine 120–glycine 140, glycine 155–methionine 175, proline 193–isoleucine 213, leucine 242–phenylalanine 262, leucine 271–valine 291, and valine 310–glycine 330.

This sequence belongs to the complex I subunit 1 family. In terms of assembly, NDH-1 is composed of 14 different subunits. Subunits NuoA, H, J, K, L, M, N constitute the membrane sector of the complex.

It localises to the cell inner membrane. It catalyses the reaction a quinone + NADH + 5 H(+)(in) = a quinol + NAD(+) + 4 H(+)(out). In terms of biological role, NDH-1 shuttles electrons from NADH, via FMN and iron-sulfur (Fe-S) centers, to quinones in the respiratory chain. The immediate electron acceptor for the enzyme in this species is believed to be ubiquinone. Couples the redox reaction to proton translocation (for every two electrons transferred, four hydrogen ions are translocated across the cytoplasmic membrane), and thus conserves the redox energy in a proton gradient. This subunit may bind ubiquinone. The chain is NADH-quinone oxidoreductase subunit H 2 from Syntrophobacter fumaroxidans (strain DSM 10017 / MPOB).